A 316-amino-acid polypeptide reads, in one-letter code: Aspartate carbamoyltransferase catalytic subunit (316 aa).

Residues Arg-56 and Thr-57 each coordinate carbamoyl phosphate. An L-aspartate-binding site is contributed by Lys-84. The carbamoyl phosphate site is built by Arg-106, His-139, and Gln-142. Arg-172 and Arg-226 together coordinate L-aspartate. Carbamoyl phosphate contacts are provided by Gly-267 and Pro-268.

This sequence belongs to the aspartate/ornithine carbamoyltransferase superfamily. ATCase family. Heterododecamer (2C3:3R2) of six catalytic PyrB chains organized as two trimers (C3), and six regulatory PyrI chains organized as three dimers (R2).

It carries out the reaction carbamoyl phosphate + L-aspartate = N-carbamoyl-L-aspartate + phosphate + H(+). It functions in the pathway pyrimidine metabolism; UMP biosynthesis via de novo pathway; (S)-dihydroorotate from bicarbonate: step 2/3. Catalyzes the condensation of carbamoyl phosphate and aspartate to form carbamoyl aspartate and inorganic phosphate, the committed step in the de novo pyrimidine nucleotide biosynthesis pathway. This Mycobacterium sp. (strain JLS) protein is Aspartate carbamoyltransferase catalytic subunit.